Consider the following 556-residue polypeptide: 2-succinyl-5-enolpyruvyl-6-hydroxy-3-cyclohexene-1-carboxylate synthase (556 aa).

Belongs to the TPP enzyme family. MenD subfamily. In terms of assembly, homodimer. The cofactor is Mg(2+). Mn(2+) is required as a cofactor. It depends on thiamine diphosphate as a cofactor.

The catalysed reaction is isochorismate + 2-oxoglutarate + H(+) = 5-enolpyruvoyl-6-hydroxy-2-succinyl-cyclohex-3-ene-1-carboxylate + CO2. Its pathway is quinol/quinone metabolism; 1,4-dihydroxy-2-naphthoate biosynthesis; 1,4-dihydroxy-2-naphthoate from chorismate: step 2/7. The protein operates within quinol/quinone metabolism; menaquinone biosynthesis. Functionally, catalyzes the thiamine diphosphate-dependent decarboxylation of 2-oxoglutarate and the subsequent addition of the resulting succinic semialdehyde-thiamine pyrophosphate anion to isochorismate to yield 2-succinyl-5-enolpyruvyl-6-hydroxy-3-cyclohexene-1-carboxylate (SEPHCHC). In Salmonella gallinarum (strain 287/91 / NCTC 13346), this protein is 2-succinyl-5-enolpyruvyl-6-hydroxy-3-cyclohexene-1-carboxylate synthase.